We begin with the raw amino-acid sequence, 250 residues long: Ribonuclease HII (250 aa).

Residues 66–250 (QLVAGVDEVG…SFAPVSEYEK (185 aa)) enclose the RNase H type-2 domain. Residues D72, E73, and D164 each coordinate a divalent metal cation.

The protein belongs to the RNase HII family. The cofactor is Mn(2+). Requires Mg(2+) as cofactor.

Its subcellular location is the cytoplasm. It carries out the reaction Endonucleolytic cleavage to 5'-phosphomonoester.. Its function is as follows. Endonuclease that specifically degrades the RNA of RNA-DNA hybrids. The chain is Ribonuclease HII from Lactobacillus gasseri (strain ATCC 33323 / DSM 20243 / BCRC 14619 / CIP 102991 / JCM 1131 / KCTC 3163 / NCIMB 11718 / NCTC 13722 / AM63).